The sequence spans 355 residues: Methionine import ATP-binding protein MetN (355 aa).

Residues 8-250 (LKNIDITFTQ…PQEDLTQEFI (243 aa)) form the ABC transporter domain. An ATP-binding site is contributed by 42–49 (GYSGAGKS).

Belongs to the ABC transporter superfamily. Methionine importer (TC 3.A.1.24) family. The complex is composed of two ATP-binding proteins (MetN), two transmembrane proteins (MetI) and a solute-binding protein (MetQ).

The protein resides in the cell membrane. It carries out the reaction L-methionine(out) + ATP + H2O = L-methionine(in) + ADP + phosphate + H(+). The enzyme catalyses D-methionine(out) + ATP + H2O = D-methionine(in) + ADP + phosphate + H(+). Its function is as follows. Part of the ABC transporter complex MetNIQ involved in methionine import. Responsible for energy coupling to the transport system. The sequence is that of Methionine import ATP-binding protein MetN from Streptococcus thermophilus (strain ATCC BAA-250 / LMG 18311).